The chain runs to 465 residues: Ribulose bisphosphate carboxylase large chain (465 aa).

At lysine 4 the chain carries N6,N6,N6-trimethyllysine. Residues asparagine 113 and threonine 163 each coordinate substrate. Lysine 165 acts as the Proton acceptor in catalysis. Residue lysine 167 participates in substrate binding. Mg(2+)-binding residues include lysine 191, aspartate 193, and glutamate 194. N6-carboxylysine is present on lysine 191. Catalysis depends on histidine 284, which acts as the Proton acceptor. Substrate contacts are provided by arginine 285, histidine 317, and serine 369.

The protein belongs to the RuBisCO large chain family. Type I subfamily. As to quaternary structure, heterohexadecamer of 8 large chains and 8 small chains; disulfide-linked. The disulfide link is formed within the large subunit homodimers. Requires Mg(2+) as cofactor. The disulfide bond which can form in the large chain dimeric partners within the hexadecamer appears to be associated with oxidative stress and protein turnover.

The protein localises to the plastid. It is found in the chloroplast. It catalyses the reaction 2 (2R)-3-phosphoglycerate + 2 H(+) = D-ribulose 1,5-bisphosphate + CO2 + H2O. The enzyme catalyses D-ribulose 1,5-bisphosphate + O2 = 2-phosphoglycolate + (2R)-3-phosphoglycerate + 2 H(+). Functionally, ruBisCO catalyzes two reactions: the carboxylation of D-ribulose 1,5-bisphosphate, the primary event in carbon dioxide fixation, as well as the oxidative fragmentation of the pentose substrate in the photorespiration process. Both reactions occur simultaneously and in competition at the same active site. The polypeptide is Ribulose bisphosphate carboxylase large chain (Epacris sp).